We begin with the raw amino-acid sequence, 320 residues long: uncharacterized protein (320 aa).

It belongs to the anthranilate phosphoribosyltransferase family.

This is an uncharacterized protein from Escherichia coli (strain K12).